Reading from the N-terminus, the 846-residue chain is Protein arginine N-methyltransferase 9 (846 aa).

TPR repeat units lie at residues Val25–Leu58, Gln67–Asp100, and Glu101–Phe134. SAM-dependent MTase PRMT-type domains are found at residues Ala137–Ile466 and Asn530–Pro846.

This sequence belongs to the class I-like SAM-binding methyltransferase superfamily. Protein arginine N-methyltransferase family. In terms of assembly, found in a complex with PRMT9, SF3B2 and SF3B4. Interacts with SF3B2.

It is found in the cytoplasm. It catalyses the reaction L-arginyl-[protein] + 2 S-adenosyl-L-methionine = N(omega),N(omega)'-dimethyl-L-arginyl-[protein] + 2 S-adenosyl-L-homocysteine + 2 H(+). Functionally, arginine methyltransferase that can both catalyze the formation of omega-N monomethylarginine (MMA) and symmetrical dimethylarginine (sDMA). Specifically mediates the symmetrical dimethylation of SF3B2. Involved in the regulation of alternative splicing of pre-mRNA. The sequence is that of Protein arginine N-methyltransferase 9 (Prmt9) from Mus musculus (Mouse).